Reading from the N-terminus, the 388-residue chain is Chorismate synthase (388 aa).

Residues arginine 39 and arginine 45 each coordinate NADP(+). Residues 95–118 (EKNEKSRRVSRPRPGHADLVGGMK) are disordered. FMN is bound by residues 130–132 (RSS), 251–252 (NA), glycine 296, 311–315 (KPIPT), and arginine 337.

It belongs to the chorismate synthase family. In terms of assembly, homotetramer. Requires FMNH2 as cofactor.

It carries out the reaction 5-O-(1-carboxyvinyl)-3-phosphoshikimate = chorismate + phosphate. The protein operates within metabolic intermediate biosynthesis; chorismate biosynthesis; chorismate from D-erythrose 4-phosphate and phosphoenolpyruvate: step 7/7. In terms of biological role, catalyzes the anti-1,4-elimination of the C-3 phosphate and the C-6 proR hydrogen from 5-enolpyruvylshikimate-3-phosphate (EPSP) to yield chorismate, which is the branch point compound that serves as the starting substrate for the three terminal pathways of aromatic amino acid biosynthesis. This reaction introduces a second double bond into the aromatic ring system. The sequence is that of Chorismate synthase from Listeria monocytogenes serovar 1/2a (strain ATCC BAA-679 / EGD-e).